The chain runs to 883 residues: Phosphoenolpyruvate carboxylase (883 aa).

Active-site residues include His141 and Lys547.

Belongs to the PEPCase type 1 family. Mg(2+) is required as a cofactor.

The catalysed reaction is oxaloacetate + phosphate = phosphoenolpyruvate + hydrogencarbonate. Its function is as follows. Forms oxaloacetate, a four-carbon dicarboxylic acid source for the tricarboxylic acid cycle. The polypeptide is Phosphoenolpyruvate carboxylase (Chromohalobacter salexigens (strain ATCC BAA-138 / DSM 3043 / CIP 106854 / NCIMB 13768 / 1H11)).